The primary structure comprises 247 residues: Aliphatic sulfonates import ATP-binding protein SsuB 2 (247 aa).

Positions 28–242 (VSVRGLQRRY…ALRPILLEEL (215 aa)) constitute an ABC transporter domain. Position 60 to 67 (60 to 67 (GESGCGKT)) interacts with ATP.

Belongs to the ABC transporter superfamily. Aliphatic sulfonates importer (TC 3.A.1.17.2) family. As to quaternary structure, the complex is composed of two ATP-binding proteins (SsuB), two transmembrane proteins (SsuC) and a solute-binding protein (SsuA).

The protein localises to the cell inner membrane. It carries out the reaction ATP + H2O + aliphatic sulfonate-[sulfonate-binding protein]Side 1 = ADP + phosphate + aliphatic sulfonateSide 2 + [sulfonate-binding protein]Side 1.. Functionally, part of the ABC transporter complex SsuABC involved in aliphatic sulfonates import. Responsible for energy coupling to the transport system. The chain is Aliphatic sulfonates import ATP-binding protein SsuB 2 from Paraburkholderia xenovorans (strain LB400).